The sequence spans 234 residues: Protein XNDC1N (234 aa).

In Homo sapiens (Human), this protein is Protein XNDC1N.